Consider the following 369-residue polypeptide: Phosphoribosyl pyrophosphate synthase-associated protein 2 (369 aa).

Met-1 carries the N-acetylmethionine modification. Residues Ser-219, Ser-227, and Ser-233 each carry the phosphoserine modification.

Belongs to the ribose-phosphate pyrophosphokinase family. In terms of assembly, binds to PRPS1 and PRPS2.

In terms of biological role, seems to play a negative regulatory role in 5-phosphoribose 1-diphosphate synthesis. The polypeptide is Phosphoribosyl pyrophosphate synthase-associated protein 2 (PRPSAP2) (Bos taurus (Bovine)).